The primary structure comprises 466 residues: RUS family member 1 (466 aa).

An N-acetylalanine modification is found at A2. The helical transmembrane segment at L245–L265 threads the bilayer.

The protein belongs to the RUS1 family.

Its subcellular location is the membrane. This chain is RUS family member 1 (Rusf1), found in Rattus norvegicus (Rat).